Reading from the N-terminus, the 467-residue chain is Cysteine--tRNA ligase (467 aa).

Residue C28 participates in Zn(2+) binding. The 'HIGH' region signature appears at 30 to 40 (ITAYDYSHIGH). C211, H236, and E240 together coordinate Zn(2+). The 'KMSKS' region motif lies at 268-272 (KMSKS). Residue K271 coordinates ATP.

This sequence belongs to the class-I aminoacyl-tRNA synthetase family. Zn(2+) is required as a cofactor.

The protein localises to the cytoplasm. The catalysed reaction is tRNA(Cys) + L-cysteine + ATP = L-cysteinyl-tRNA(Cys) + AMP + diphosphate. This is Cysteine--tRNA ligase (cysS) from Archaeoglobus fulgidus (strain ATCC 49558 / DSM 4304 / JCM 9628 / NBRC 100126 / VC-16).